Consider the following 259-residue polypeptide: MAAAAAAAAGDSDSWDADAFSVEDPVRKVGGGGTAGGDRWEGEDEDEDVKDNWDDDDDEKKEEAEVKPEVKISEKKKIAEKIKEKERQQKKRQEEIKKRLEEPEEPKVLTPEEQLADKLRLKKLQEESDLELAKETFGVNNTVYGIDAMNPSSRDDFTEFGKLLKDKITQYEKSLYYASFLEVLVRDVCISLEIDDLKKITNSLTVLCSEKQKQEKQSKAKKKKKGVVPGGGLKATMKDDLADYGGYDGGYVQDYEDFM.

The segment covering 1 to 12 (MAAAAAAAAGDS) has biased composition (low complexity). Positions 1 to 70 (MAAAAAAAAG…KEEAEVKPEV (70 aa)) are sufficient for interaction with EIF3B. The segment at 1–111 (MAAAAAAAAG…EPEEPKVLTP (111 aa)) is disordered. Residues Ser-12, Ser-14, and Ser-21 each carry the phosphoserine modification. The span at 41–60 (EGEDEDEDVKDNWDDDDDEK) shows a compositional bias: acidic residues. Basic and acidic residues predominate over residues 61–107 (KEEAEVKPEVKISEKKKIAEKIKEKERQQKKRQEEIKKRLEEPEEPK). Residues 71–136 (KISEKKKIAE…ESDLELAKET (66 aa)) adopt a coiled-coil conformation. Lys-107 is covalently cross-linked (Glycyl lysine isopeptide (Lys-Gly) (interchain with G-Cter in SUMO2)). Thr-110 is modified (phosphothreonine). Ser-128 carries the post-translational modification Phosphoserine. A disordered region spans residues 218–247 (SKAKKKKKGVVPGGGLKATMKDDLADYGGY). The promotes stable association with the 40S ribosome stretch occupies residues 244-259 (YGGYDGGYVQDYEDFM). Position 255 is a phosphotyrosine (Tyr-255).

It belongs to the eIF-3 subunit J family. Component of the eukaryotic translation initiation factor 3 (eIF-3) complex, which is composed of 13 subunits: EIF3A, EIF3B, EIF3C, EIF3D, EIF3E, EIF3F, EIF3G, EIF3H, EIF3I, EIF3J, EIF3K, EIF3L and EIF3M. The eIF-3 complex appears to include 3 stable modules: module A is composed of EIF3A, EIF3B, EIF3G and EIF3I; module B is composed of EIF3F, EIF3H, and EIF3M; and module C is composed of EIF3C, EIF3D, EIF3E, EIF3K and EIF3L. EIF3C of module C binds EIF3B of module A and EIF3H of module B, thereby linking the three modules. EIF3J is a labile subunit that binds to the eIF-3 complex via EIF3B. The eIF-3 complex interacts with RPS6KB1 under conditions of nutrient depletion. Mitogenic stimulation leads to binding and activation of a complex composed of MTOR and RPTOR, leading to phosphorylation and release of RPS6KB1 and binding of EIF4B to eIF-3. Phosphorylated. Phosphorylation is enhanced upon serum stimulation.

It is found in the cytoplasm. In terms of biological role, component of the eukaryotic translation initiation factor 3 (eIF-3) complex, which is required for several steps in the initiation of protein synthesis. The eIF-3 complex associates with the 40S ribosome and facilitates the recruitment of eIF-1, eIF-1A, eIF-2:GTP:methionyl-tRNAi and eIF-5 to form the 43S pre-initiation complex (43S PIC). The eIF-3 complex stimulates mRNA recruitment to the 43S PIC and scanning of the mRNA for AUG recognition. The eIF-3 complex is also required for disassembly and recycling of post-termination ribosomal complexes and subsequently prevents premature joining of the 40S and 60S ribosomal subunits prior to initiation. The eIF-3 complex specifically targets and initiates translation of a subset of mRNAs involved in cell proliferation, including cell cycling, differentiation and apoptosis, and uses different modes of RNA stem-loop binding to exert either translational activation or repression. This subunit binds directly within the mRNA entry channel of the 40S ribosome to the aminoacyl (A) site. It may regulate the interaction between the 43S PIC and mRNA. The sequence is that of Eukaryotic translation initiation factor 3 subunit J from Pongo abelii (Sumatran orangutan).